The chain runs to 598 residues: IQ calmodulin-binding motif-containing protein 1 (598 aa).

The interaction with BBS1, BBS8 and BBS9 stretch occupies residues 1–157 (MKPTGTDPRI…SLFWLLGGHV (157 aa)). Residues 287 to 598 (QEVEEQKLHQ…NLFIGGTKPP (312 aa)) form an interaction with CEP290, BBS1, BBS2, BBS4, BBS5, BBS7, BBS8 and BBS9 region. 4 consecutive IQ domains span residues 294 to 317 (LHQA…LKKL), 318 to 338 (PSAV…MLLE), 387 to 416 (EEKS…SLIE), and 417 to 437 (YKAA…CRKK). Residues 336–373 (LLEINRQKEEEDLKLQLQLQRQRAMRLSRELQLSMLEI) are a coiled coil. The interaction with BBS1, BBS2, BBS4, BBS7, BBS8 and BBS9 stretch occupies residues 530 to 598 (AEGKEPELFL…NLFIGGTKPP (69 aa)). Serine 572 carries the phosphoserine modification.

Interacts with CEP290/NPHP6; IQCB1/NPHP5 and CEP290 are proposed to form a functional NPHP5-6 module/NPHP6; localized to the centrosome. Interacts with calmodulin, ATXN10. Interacts with NPHP1, INVS, NPHP4 and RPGRIP1L; these interactions likely require additional interactors. Associates with the BBSome complex; interacts with BBS1, BBS2, BBS4, BBS5, BBS7, BBS8 and BBS9. In terms of tissue distribution, ubiquitously expressed in fetal and adult tissues. Localized to the outer segments and connecting cilia of photoreceptor cells. Up-regulated in a number of primary colorectal and gastric tumors.

It localises to the cytoplasm. It is found in the cytoskeleton. Its subcellular location is the microtubule organizing center. The protein resides in the centrosome. The protein localises to the centriole. Involved in ciliogenesis. The function in an early step in cilia formation depends on its association with CEP290/NPHP6. Involved in regulation of the BBSome complex integrity, specifically for presence of BBS2 and BBS5 in the complex, and in ciliary targeting of selected BBSome cargos. May play a role in controlling entry of the BBSome complex to cilia possibly implicating CEP290/NPHP6. This is IQ calmodulin-binding motif-containing protein 1 (IQCB1) from Homo sapiens (Human).